A 348-amino-acid chain; its full sequence is 11-beta-hydroxysteroid dehydrogenase A (348 aa).

A helical; Signal-anchor for type II membrane protein transmembrane segment spans residues 10–30 (LIAPPFTFFFLLFFLPPFQIF). A Proline-knob motif is present at residues 13–26 (PPFTFFFLLFFLPP). NADP(+)-binding positions include 54–80 (GASS…AARR), aspartate 105, and 132–135 (NAGI). Serine 184 is a substrate binding site. Residue tyrosine 197 is the Proton acceptor of the active site. Residues 197 to 201 (YNASK) and lysine 201 contribute to the NADP(+) site.

This sequence belongs to the short-chain dehydrogenases/reductases (SDR) family. In terms of tissue distribution, expressed in seeds (at protein level). Not expressed in stem, leaf or root (at protein level).

It localises to the lipid droplet. The protein resides in the membrane. The catalysed reaction is an 11beta-hydroxysteroid + NADP(+) = an 11-oxosteroid + NADPH + H(+). It carries out the reaction an 11beta-hydroxysteroid + NAD(+) = an 11-oxosteroid + NADH + H(+). The enzyme catalyses corticosterone + NADP(+) = 11-dehydrocorticosterone + NADPH + H(+). It catalyses the reaction corticosterone + NAD(+) = 11-dehydrocorticosterone + NADH + H(+). The catalysed reaction is 17beta-estradiol + NADP(+) = estrone + NADPH + H(+). It carries out the reaction 17beta-estradiol + NAD(+) = estrone + NADH + H(+). Has dehydrogenase activity against corticosterone (11 beta-hydroxysteroid) and estradiol (17 beta-hydroxysteroid), with higher activity against estradiol. Possesses higher dehydrogenase activity with NADP(+) than NAD(+) regardless of the sterol substrate. May be involved in signal transduction regulated by various sterols. The protein is 11-beta-hydroxysteroid dehydrogenase A of Sesamum indicum (Oriental sesame).